Consider the following 292-residue polypeptide: Sulfofructosephosphate aldolase (292 aa).

The active-site Schiff-base intermediate with substrate is the Lys193.

It belongs to the aldolase LacD family. As to quaternary structure, homotetramer.

The enzyme catalyses 6-deoxy-6-sulfo-D-fructose 1-phosphate = (2S)-3-sulfolactaldehyde + dihydroxyacetone phosphate. Its function is as follows. Cleaves 6-deoxy-6-sulfo-D-fructose 1-phosphate (SFP) to form dihydroxyacetone phosphate (DHAP) and 3-sulfolactaldehyde (SLA). This is Sulfofructosephosphate aldolase (yihT) from Salmonella typhi.